Reading from the N-terminus, the 72-residue chain is MIIPVRCFSCGRVIASDYGRYIKRVNEIKAEGRDPSPEEIEKIFDDLGIERYCCRRMIVSHVDLISEIMPFS.

Cysteine 7, cysteine 10, cysteine 53, and cysteine 54 together coordinate Zn(2+).

Belongs to the archaeal Rpo10/eukaryotic RPB10 RNA polymerase subunit family. In terms of assembly, part of the RNA polymerase complex. Requires Zn(2+) as cofactor.

It is found in the cytoplasm. It catalyses the reaction RNA(n) + a ribonucleoside 5'-triphosphate = RNA(n+1) + diphosphate. Its function is as follows. DNA-dependent RNA polymerase (RNAP) catalyzes the transcription of DNA into RNA using the four ribonucleoside triphosphates as substrates. This Thermoplasma acidophilum (strain ATCC 25905 / DSM 1728 / JCM 9062 / NBRC 15155 / AMRC-C165) protein is DNA-directed RNA polymerase subunit Rpo10.